Here is a 118-residue protein sequence, read N- to C-terminus: Large ribosomal subunit protein bL19 (118 aa).

The protein belongs to the bacterial ribosomal protein bL19 family.

This protein is located at the 30S-50S ribosomal subunit interface and may play a role in the structure and function of the aminoacyl-tRNA binding site. This Helicobacter hepaticus (strain ATCC 51449 / 3B1) protein is Large ribosomal subunit protein bL19.